The chain runs to 44 residues: Large ribosomal subunit protein bL36 (44 aa).

It belongs to the bacterial ribosomal protein bL36 family.

This chain is Large ribosomal subunit protein bL36, found in Pseudoalteromonas translucida (strain TAC 125).